A 218-amino-acid chain; its full sequence is uncharacterized protein (218 aa).

A run of 4 helical transmembrane segments spans residues 10 to 30 (IPPL…SLGI), 55 to 75 (IGVG…GYSI), 147 to 167 (VTGG…AGMA), and 175 to 195 (FSWI…ILLR).

It belongs to the DedA family.

The protein resides in the cell membrane. This is an uncharacterized protein from Mycobacterium tuberculosis (strain CDC 1551 / Oshkosh).